Consider the following 369-residue polypeptide: MDAEGLSTDELFCFLQAKRNEDFSYSHILSSMCTTPHPVAVQAHNLFMETNLGDPGLFPGTATLEDRLIRWFADLYHEPSAGGCTTSGGTESNIQVLRFCKKTKNVKEPNIIVPASAHFSFEKACGMMDIEMRVVPVDEQYRMKTDAAGELIDKNTCCIVGVAGTTEYGMTDPIPALGKLAEQEGVHLHVDAAFGGYVLPFLDDAPPFDFSVPGVGSIAVDPHKMGLSTIPSGVLMVRDERVFCNLLVETPYLTTKQAYSLTGTRPGASVAAAYAVMAYLGRKGMKALVTGCMENTRRMIEGMEAFGVHRKVTPDVNVATFEHVSVPSPWVVSYTRKGDLRIVCMPHVTRDVVEAFLSDFGESYVSHIS.

Lysine 224 is subject to N6-(pyridoxal phosphate)lysine.

It belongs to the group II decarboxylase family. MfnA subfamily. Requires pyridoxal 5'-phosphate as cofactor.

The enzyme catalyses L-tyrosine + H(+) = tyramine + CO2. The catalysed reaction is L-aspartate + H(+) = beta-alanine + CO2. The protein operates within cofactor biosynthesis; methanofuran biosynthesis. It functions in the pathway cofactor biosynthesis; coenzyme A biosynthesis. Functionally, catalyzes the decarboxylation of L-tyrosine to produce tyramine for methanofuran biosynthesis. Can also catalyze the decarboxylation of L-aspartate to produce beta-alanine for coenzyme A (CoA) biosynthesis. The sequence is that of Probable L-tyrosine/L-aspartate decarboxylase from Methanospirillum hungatei JF-1 (strain ATCC 27890 / DSM 864 / NBRC 100397 / JF-1).